The following is a 420-amino-acid chain: 3-phosphoshikimate 1-carboxyvinyltransferase (420 aa).

3-phosphoshikimate is bound by residues Lys-20, Ser-21, and Arg-25. Lys-20 serves as a coordination point for phosphoenolpyruvate. A phosphoenolpyruvate-binding site is contributed by Arg-119. 7 residues coordinate 3-phosphoshikimate: Ser-161, Ser-162, Gln-163, Ser-189, Asp-303, Gln-326, and Lys-330. Position 163 (Gln-163) interacts with phosphoenolpyruvate. Asp-303 (proton acceptor) is an active-site residue. Residues Arg-334, Arg-375, and Lys-400 each contribute to the phosphoenolpyruvate site.

The protein belongs to the EPSP synthase family. As to quaternary structure, monomer.

The protein resides in the cytoplasm. The enzyme catalyses 3-phosphoshikimate + phosphoenolpyruvate = 5-O-(1-carboxyvinyl)-3-phosphoshikimate + phosphate. It participates in metabolic intermediate biosynthesis; chorismate biosynthesis; chorismate from D-erythrose 4-phosphate and phosphoenolpyruvate: step 6/7. Its function is as follows. Catalyzes the transfer of the enolpyruvyl moiety of phosphoenolpyruvate (PEP) to the 5-hydroxyl of shikimate-3-phosphate (S3P) to produce enolpyruvyl shikimate-3-phosphate and inorganic phosphate. The sequence is that of 3-phosphoshikimate 1-carboxyvinyltransferase from Dehalococcoides mccartyi (strain ATCC BAA-2266 / KCTC 15142 / 195) (Dehalococcoides ethenogenes (strain 195)).